The primary structure comprises 491 residues: Glutamate--tRNA ligase (491 aa).

Residues 12 to 22 carry the 'HIGH' region motif; the sequence is PSPTGTPHVGL. A disordered region spans residues 111–134; the sequence is STPEEVEERHKAAGRDPKLGYDNF. A compositionally biased stretch (basic and acidic residues) spans 117–134; that stretch reads EERHKAAGRDPKLGYDNF. The 'KMSKS' region signature appears at 256–260; the sequence is KLSKR. Lysine 259 provides a ligand contact to ATP.

This sequence belongs to the class-I aminoacyl-tRNA synthetase family. Glutamate--tRNA ligase type 1 subfamily. In terms of assembly, monomer.

The protein resides in the cytoplasm. The enzyme catalyses tRNA(Glu) + L-glutamate + ATP = L-glutamyl-tRNA(Glu) + AMP + diphosphate. Its function is as follows. Catalyzes the attachment of glutamate to tRNA(Glu) in a two-step reaction: glutamate is first activated by ATP to form Glu-AMP and then transferred to the acceptor end of tRNA(Glu). The polypeptide is Glutamate--tRNA ligase (Rhodococcus jostii (strain RHA1)).